We begin with the raw amino-acid sequence, 346 residues long: DNA-directed RNA polymerases I and III subunit RPAC1 (346 aa).

Ala2 bears the N-acetylalanine mark.

Belongs to the archaeal Rpo3/eukaryotic RPB3 RNA polymerase subunit family. Component of the RNA polymerase I and RNA polymerase III complexes consisting of at least 13 and 17 subunits, respectively. Pol I complex consists of a ten-subunit catalytic core composed of POLR1A/RPA1, POLR1B/RPA2, POLR1C/RPAC1, POLR1D/RPAC2, POLR1H/RPA12, POLR2E/RPABC1, POLR2F/RPABC2, POLR2H/RPABC3, POLR2K/RPABC4 and POLR2L/RPABC5; a mobile stalk subunit POLR1F/RPA43 protruding from the core and additional subunits homologous to general transcription factors POLR1E/RPA49 and POLR1G/RPA34. Part of Pol I pre-initiation complex (PIC), in which Pol I core assembles with RRN3 and promoter-bound UTBF and SL1/TIF-IB complex. Pol III complex consists of a ten-subunit catalytic core composed of POLR3A/RPC1, POLR3B/RPC2, POLR1C/RPAC1, POLR1D/RPAC2, POLR3K/RPC10, POLR2E/RPABC1, POLR2F/RPABC2, POLR2H/RPABC3, POLR2K/RPABC4 and POLR2L/RPABC5; a mobile stalk composed of two subunits POLR3H/RPC8 and CRCP/RPC9, protruding from the core and functioning primarily in transcription initiation; and additional subunits homologous to general transcription factors of the RNA polymerase II machinery, POLR3C/RPC3-POLR3F/RPC6-POLR3G/RPC7 heterotrimer required for transcription initiation and POLR3D/RPC4-POLR3E/RPC5 heterodimer involved in both transcription initiation and termination.

It is found in the nucleus. The protein localises to the cytoplasm. Its subcellular location is the cytosol. Its function is as follows. DNA-dependent RNA polymerase catalyzes the transcription of DNA into RNA using the four ribonucleoside triphosphates as substrates. Common component of RNA polymerases I and III which synthesize ribosomal RNA precursors and short non-coding RNAs including 5S rRNA, snRNAs, tRNAs and miRNAs, respectively. POLR1C/RPAC1 is part of the polymerase core and may function as a clamp element that moves to open and close the cleft. This chain is DNA-directed RNA polymerases I and III subunit RPAC1, found in Mus musculus (Mouse).